Here is a 971-residue protein sequence, read N- to C-terminus: Serine/threonine-protein kinase CLA4 (971 aa).

Residues 1-40 are disordered; the sequence is MTSIYTSDLKNHRRAPPPPNGAAGSGSGSGSGSGSGSGSL. Over residues 23-37 the composition is skewed to gly residues; the sequence is AGSGSGSGSGSGSGS. Residues 67-178 form the PH domain; sequence SKRQSGWVHV…WLDAFTTKCP (112 aa). The tract at residues 201-221 is disordered; the sequence is LTNGSLNGNSSSSPTSGLLSS. A CRIB domain is found at 231 to 244; the sequence is VSGPINFTHKVHVG. Disordered regions lie at residues 292 to 517 and 554 to 653; these read GGNS…KIHP and SKKS…QLKK. Low complexity-rich tracts occupy residues 307 to 326 and 365 to 404; these read NSKT…TKNN and LNGS…PLNN. Positions 423-433 are enriched in polar residues; sequence SGTSSDTYSNK. Over residues 434–448 the composition is skewed to basic and acidic residues; the sequence is NHQDRSGYEQQRQQR. Over residues 449 to 482 the composition is skewed to low complexity; the sequence is TDSSQQQQQQKQHQYQQKSQQQQQQPQQPLSSHQ. The span at 491 to 500 shows a compositional bias: pro residues; it reads QVPPTLPSSG. Over residues 554–578 the composition is skewed to low complexity; it reads SKKSQQQLASKQPSPPSSQQQQQKP. Residues 617 to 630 show a composition bias toward polar residues; sequence NETSGVSKTPSPTD. The 256-residue stretch at 680 to 935 folds into the Protein kinase domain; it reads FRIVEKAGQG…TDELLEHSFI (256 aa). ATP contacts are provided by residues 686–694 and K710; that span reads AGQGASGNV. D803 acts as the Proton acceptor in catalysis.

The protein belongs to the protein kinase superfamily. STE Ser/Thr protein kinase family. STE20 subfamily.

It carries out the reaction L-seryl-[protein] + ATP = O-phospho-L-seryl-[protein] + ADP + H(+). The catalysed reaction is L-threonyl-[protein] + ATP = O-phospho-L-threonyl-[protein] + ADP + H(+). Functionally, essential for virulence and morphological switching (hyphal formation) of C.albicans. The sequence is that of Serine/threonine-protein kinase CLA4 (CLA4) from Candida albicans (Yeast).